The chain runs to 260 residues: Triosephosphate isomerase (260 aa).

11–13 lines the substrate pocket; the sequence is NWK. H103 acts as the Electrophile in catalysis. The Proton acceptor role is filled by E175. Substrate is bound by residues G181, S220, and 241 to 242; that span reads GG.

The protein belongs to the triosephosphate isomerase family. As to quaternary structure, homodimer.

The protein resides in the cytoplasm. The catalysed reaction is D-glyceraldehyde 3-phosphate = dihydroxyacetone phosphate. It participates in carbohydrate biosynthesis; gluconeogenesis. It functions in the pathway carbohydrate degradation; glycolysis; D-glyceraldehyde 3-phosphate from glycerone phosphate: step 1/1. Involved in the gluconeogenesis. Catalyzes stereospecifically the conversion of dihydroxyacetone phosphate (DHAP) to D-glyceraldehyde-3-phosphate (G3P). The polypeptide is Triosephosphate isomerase (Shewanella denitrificans (strain OS217 / ATCC BAA-1090 / DSM 15013)).